A 120-amino-acid chain; its full sequence is Nitrogenase-stabilizing/protective protein NifW (120 aa).

It belongs to the NifW family. In terms of assembly, homotrimer; associates with NifD.

May protect the nitrogenase Fe-Mo protein from oxidative damage. In Rhodospirillum rubrum (strain ATCC 11170 / ATH 1.1.1 / DSM 467 / LMG 4362 / NCIMB 8255 / S1), this protein is Nitrogenase-stabilizing/protective protein NifW.